The chain runs to 382 residues: MSEQPTEPLSIKEEYQLWRKNCRYMYEFVSETALMWPSLTIQWLPNYTTTNGLIDAKLLLGTHTSNQSANQLKVASTQLSADPNVKANSKIKTVQKLENNAEICRARYMPQDANIVATINGLGEVDLYNLDTETRYSHFAPHTKNGYGLSWNPKQKGLLVTGADDNFVCVTDTTTNKTTFKSDIQKDIVNDVKWHQFNGNLFASVSEDSHVYLFDARDNKVVSQYYAESSNGINSLAFSPFAENLVAIGNTSSNINLLDLRKLGENSGLLHTMMGHSEGITCMEFSPHHDGILATGSQDRRIIIWDLFKVGEEQQQEDAEDGCPELFMMHAGHTAGVSDLSWCPFKDWMIGSVADDNIVHLWEISKKLITNEEAEVDVSILE.

5 WD repeats span residues 98–138 (ENNA…RYSH), 141–181 (PHTK…TTFK), 184–224 (IQKD…VVSQ), 228–268 (ESSN…ENSG), and 275–315 (GHSE…EEQQ). The tract at residues 317–321 (EDAED) is interaction with the histone H4 N-terminus. A WD 6 repeat occupies 332–372 (GHTAGVSDLSWCPFKDWMIGSVADDNIVHLWEISKKLITNE).

Belongs to the WD repeat RBAP46/RBAP48/MSI1 family. As to quaternary structure, component of the HAT-B complex composed of at least HAT1 and HAT2. The HAT-B complex binds to histone H4 tail.

The protein localises to the cytoplasm. It is found in the nucleus. In terms of biological role, regulatory subunit of the histone acetylase B (HAT-B) complex. The complex acetylates 'Lys-14' of histone H4 which is required for telomeric silencing. This chain is Histone acetyltransferase type B subunit 2 (HAT2), found in Candida albicans (strain SC5314 / ATCC MYA-2876) (Yeast).